The chain runs to 204 residues: Putative AgrB-like protein (204 aa).

4 helical membrane-spanning segments follow: residues 40-60 (IILI…ATGL), 87-107 (LNCT…FQNI), 111-131 (NWIV…FAPA), and 156-176 (LILT…LIMV).

It belongs to the AgrB family.

The protein localises to the cell membrane. In terms of biological role, may be involved in the proteolytic processing of a quorum sensing system signal molecule precursor. The sequence is that of Putative AgrB-like protein from Listeria welshimeri serovar 6b (strain ATCC 35897 / DSM 20650 / CCUG 15529 / CIP 8149 / NCTC 11857 / SLCC 5334 / V8).